A 91-amino-acid chain; its full sequence is Small ribosomal subunit protein uS19 (91 aa).

Belongs to the universal ribosomal protein uS19 family.

Its function is as follows. Protein S19 forms a complex with S13 that binds strongly to the 16S ribosomal RNA. In Sphingopyxis alaskensis (strain DSM 13593 / LMG 18877 / RB2256) (Sphingomonas alaskensis), this protein is Small ribosomal subunit protein uS19.